A 425-amino-acid chain; its full sequence is O-methyltransferase AMT9 (425 aa).

S-adenosyl-L-methionine contacts are provided by residues 257–258, D280, 306–307, R322, and R323; these read GG and DF. H326 serves as the catalytic Proton acceptor.

It belongs to the class I-like SAM-binding methyltransferase superfamily. Cation-independent O-methyltransferase family.

It participates in mycotoxin biosynthesis. O-methyltransferase; part of the gene clusters that mediate the biosynthesis of AM-toxins, host-selective toxins (HSTs) causing Alternaria blotch on apple, a worldwide distributed disease. AM-toxins are cyclic depsipeptides containing the 3 residues 2-hydroxy-isovaleric acid (2-HIV), dehydroalanine, L-alanine which are common for all 3 AM-toxins I to III. The fourth precursor is L-alpha-amino-methoxyphenyl-valeric acid (L-Amv) for AM-toxin I, L-alpha-amino-phenyl-valeric acid (L-Apv) for AM-toxin II, and L-alpha-amino-hydroxyphenyl-valeric acid (L-Ahv) for AM-toxin III. AM-toxins have two target sites for affecting susceptible apple cells; they cause invagination of the plasma membrane and electrolyte loss and chloroplast disorganization. The non-ribosomal peptide synthetase AMT1 contains 4 catalytic modules and is responsible for activation of each residue in AM-toxin. The aldo-keto reductase AMT2 catalyzes the conversion of 2-keto-isovaleric acid (2-KIV) to 2-hydroxy-isovaleric acid (2-HIV), one of the precursor residues incorporated by AMT1 during AM-toxin biosynthesis, by reduction of its ketone to an alcohol. The cytochrome P450 monooxygenase AMT3 and the thioesterase AMT4 are also important for AM-toxin production, but their exact function within the AM-toxin biosynthesis are not known yet. Up to 21 proteins (including AMT1 to AMT4) are predicted to be involved in AM-toxin biosynthesis since their expression ishighly up-regulated in AM-toxin-producing cultures. This chain is O-methyltransferase AMT9, found in Alternaria alternata (Alternaria rot fungus).